The primary structure comprises 518 residues: MAVALGCAIQASLNQGSVFQEYDTDCEVFRQRFRQFQYREAAGPHEAFNKLWELCCQWLKPKMRSKEQILELLVLEQFLTILPTEIETWVREHCPENRERVVSLIEDLQRELEIPEQQVDMHDMLLEELAPVGTAHIPPTMHLESPALQVMGPAQEAPVTEAWIPQAGPPELNYGATGECQNFLDPGYPLPKLDMNFSLENREEPWVKELQDSKEMKQLLDSKIGFEIGIENEEDTSKQKKMETMYPFIVTLEGNALQGPILQKDYVQLENQWETPPEDLQTDLAKLVDQQNPTLGETPENSNLEEPLNPKPHKKKSPGEKPHRCPQCGKCFARKSQLTGHQRIHSGEEPHKCPECGKRFLRSSDLYRHQRLHTGERPYECTVCKKRFTRRSHLIGHQRTHSEEETYKCLECGKSFCHGSSLKRHLKTHTGEKPHRCHNCGKSFSRLTALTLHQRTHTEERPFKCNYCGKSFRQRPSLVIHLRIHTGEKPYKCTHCSKSFRQRAGLIMHQVTHFRGLI.

Residues 30–112 (RQRFRQFQYR…SLIEDLQREL (83 aa)) enclose the SCAN box domain. The segment covering 292 to 304 (NPTLGETPENSNL) has biased composition (polar residues). The interval 292 to 325 (NPTLGETPENSNLEEPLNPKPHKKKSPGEKPHRC) is disordered. C2H2-type zinc fingers lie at residues 323-345 (HRCPQCGKCFARKSQLTGHQRIH), 351-373 (HKCPECGKRFLRSSDLYRHQRLH), 379-401 (YECTVCKKRFTRRSHLIGHQRTH), 407-429 (YKCLECGKSFCHGSSLKRHLKTH), 435-457 (HRCHNCGKSFSRLTALTLHQRTH), 463-485 (FKCNYCGKSFRQRPSLVIHLRIH), and 491-513 (YKCTHCSKSFRQRAGLIMHQVTH).

This sequence belongs to the krueppel C2H2-type zinc-finger protein family.

The protein localises to the nucleus. Its function is as follows. May be involved in transcriptional regulation. The protein is Zinc finger protein 449 (ZNF449) of Gorilla gorilla gorilla (Western lowland gorilla).